The sequence spans 40 residues: Large ribosomal subunit protein bL36 (40 aa).

This sequence belongs to the bacterial ribosomal protein bL36 family.

The polypeptide is Large ribosomal subunit protein bL36 (Corynebacterium jeikeium (strain K411)).